Reading from the N-terminus, the 233-residue chain is Protein Thf1 (233 aa).

Residues 183–205 (DKLSKDLELYRSNLDKMTQALAV) are a coiled coil. Residues 213 to 233 (DRKKREQRQQQASTPVAPPNE) are disordered.

It belongs to the THF1 family.

May be involved in photosynthetic membrane biogenesis. In Trichormus variabilis (strain ATCC 29413 / PCC 7937) (Anabaena variabilis), this protein is Protein Thf1.